A 409-amino-acid polypeptide reads, in one-letter code: Small ribosomal subunit protein mS47 (409 aa).

The N-terminal 26 residues, 1 to 26 (MQTVKALRRVSEPLQWVRSVSYGRRF), are a transit peptide targeting the mitochondrion. The tract at residues 388–409 (ASELDDSDSELKLPTAQREPYF) is disordered.

The protein belongs to the enoyl-CoA hydratase/isomerase family. Mitochondrion-specific ribosomal protein mS47 subfamily. As to quaternary structure, component of the mitochondrial ribosome small subunit.

The protein localises to the mitochondrion. This Arabidopsis thaliana (Mouse-ear cress) protein is Small ribosomal subunit protein mS47.